The sequence spans 759 residues: Protein zyg-11 homolog A (759 aa).

LRR repeat units follow at residues L204 to K227, M235 to H260, and V490 to V513.

The protein belongs to the zyg-11 family.

Functionally, probably acts as a target recruitment subunit in an E3 ubiquitin ligase complex ZYGA-CUL2-elongin BC. The chain is Protein zyg-11 homolog A (ZYG11A) from Homo sapiens (Human).